Reading from the N-terminus, the 1119-residue chain is Leucine-rich repeats and immunoglobulin-like domains protein 3 (1119 aa).

The signal sequence occupies residues 1–24 (MSAPSLRARAAGLGLLLCAVLGRA). The region spanning 38 to 74 (PSGVAAERPCPTTCRCLGDLLDCSRKRLARLPEPLPS) is the LRRNT domain. LRR repeat units lie at residues 75 to 96 (WVAR…SMSH), 99 to 120 (SLRE…GPVS), 122 to 142 (NITL…EHLK), 146 to 167 (SLET…FPAL), 168 to 189 (QLKY…YFDN), 193 to 214 (TLLV…MFKL), 216 to 237 (QLQH…TFQG), 240 to 261 (ALKS…AFWG), 264 to 285 (NMEI…WLYG), 288 to 309 (MLQE…AWEF), 312 to 333 (KLSE…SFLG), 336 to 357 (LLNT…AFRG), 360 to 382 (SLKT…NGAF), 387 to 408 (KLRR…AFTG), and 411 to 432 (ALEH…AFSQ). 2 N-linked (GlcNAc...) asparagine glycosylation sites follow: N122 and N156. A glycan (N-linked (GlcNAc...) asparagine) is linked at N274. Residues N442, N469, and N515 are each glycosylated (N-linked (GlcNAc...) asparagine). The LRRCT domain maps to 444–495 (SSLLCDCQLKWLPQWVAENNFQSFVNASCAHPQLLKGRSIFAVSPDGFVCDD). 3 consecutive Ig-like C2-type domains span residues 499–598 (PQIT…AKLT), 603–692 (PSFT…ATLT), and 697–783 (PSFL…VRLS). 2 disulfide bridges follow: C520–C581 and C624–C676. Residues N688 and N729 are each glycosylated (N-linked (GlcNAc...) asparagine). The cysteines at positions 718 and 767 are disulfide-linked. Residues 810 to 830 (VVIIAVVCCVVGTSLVWVVII) form a helical membrane-spanning segment. Residues N905, N987, N999, and N1016 are each glycosylated (N-linked (GlcNAc...) asparagine). The interval 1073–1093 (SSPDLDSGSEEDGKERTDFQE) is disordered. Residues 1083 to 1093 (EDGKERTDFQE) show a composition bias toward basic and acidic residues.

As to quaternary structure, interacts with EGFR, ERBB2 and ERBB4 (in vitro). Widely expressed.

The protein localises to the cell membrane. The protein resides in the cytoplasmic vesicle membrane. May play a role in craniofacial and inner ear morphogenesis during embryonic development. May act within the otic vesicle epithelium to control formation of the lateral semicircular canal in the inner ear, possibly by restricting the expression of NTN1. This is Leucine-rich repeats and immunoglobulin-like domains protein 3 (LRIG3) from Homo sapiens (Human).